Consider the following 1861-residue polypeptide: MVDKNIYIIQGEINIVVGAIKRNARWSTHIPLDEERDPLLHSFSNLKEVLNSVTELSEIEPNVFLRPFLEVIRSEDTTGPITGLALTSVNKFLSYALIDPTHEGTAEGMENMADAVTHARFVGTDPASDEVVLMKILQVLRTLLLTPVGTHLTNESVCEIMQSCFRICFEMRLSELLRKSAEHTLVDMVQLLFTRLPQFKEEPKSYVGTNMKKLKMRAGGMSDSSKWKKQKRSPRPPRHTTKVTPGSELPTPNGATLPSNLTGGVPFIDAPTSISSASSEAASTVVSPCTDSGLELSSQTTSKEDLTDLEQAGSPREITTSEPGSSEMGASDQLDPQEGAHVEKAQSASVESIPEVLEECTSPADHSDSASVHDMDYVNPRGVRFTQSSQKEGTALVPYGLPCIRELFRFLISLTNPHDRHNSEVMIHMGLHLLTVALESAPVAQCQTLLGLIKDEMCRHLFQLLSVERLNLYAASLRVCFLLFESMREHLKFQLEMYIKKLMEIITVENPKMPYEMKEMALEAVVQLWRIPSFVTELYINYDCDYYCSNLFEDLTKLLSKNAFPVSGQLYTTHLLSLDALLTVIDSTESHCQAKVLNTLNQQEKKETARPGFEAVDGNPETNKSERATSDGKSTGVALDARGLHFPSGGWLSTEHGKPGCRDLEEAGDSGADKKFTRKPPRFSCLLPDPRELIEIKNKKKLLITGTEQFNQKPKKGIQFLQEKGLLTIPMDNTEVAQWLRENPRLDKKMIGEFVSDRKNMDLLESFVSTFSFQGLRLDEALRLYLEAFRLPGEAPVIHRLLEVFTEHWRSCNGSPFANSDACFALAYAVIMLNTDQHNHNVRKQNAPMTLEEFRKNLKGVNGGKDFEQDILEDMYHAIKNEEIVMPEEQTGLVRENYVWSVLLHRGASPEGVFLRVPPGSYDLDLFTMTWGPTIAALSYVFDKSLEETIIQKAISGFRKCAMISAHYGLSDVFDNLIISLCKFTALSSESIENLPSVFGSNPKAHIAAKTVFHLAHRHGDILREGWKNIMEAMLQLFRAQLLPKAMVEVEDFVDPNGKISLQREETPSNRGESTVLSFVSWLTLSGPEQSSVRGPSTENQEAKRVALDCIKQCDPEKMITESKFLQLESLQELMKALVSVTPDEETYDEEDAAFCLEMLLRIVLENRDRVGCVWQTVRDHLYHLCVQAQDFCFLVERAVVGLLRLAIRLLRREEISGQVLLSLRILLLMKPSVLSRVSHQVAYGLHELLKTNAANIHSGDDWATLFTLLECIGSGVKPPDALQATARADAPDAGAQSDSELPSYHQNDVSLDRGYTSDSEVYTDHGRPGKIHRSATDADMVNSGWLVVGKDDIDNSKPGAGLSRPGPSPLVNQYSLTVGLDLGPHDTKSLLKCVESLSFIVRDAAHITPDNFELCVKTLRIFVEASLNGGCKSQDKRSKSHKYDSKGNRFKKKPKEGSMLRRPRGSNQHATRGGHSDEEEDEGVPASYHTVSLQVSQDLLDLMHTLHTRAASIYSSWAEEQRHLEGGGQKIEADSRTLWAHCWCPLLQGIACLCCDARRQVRMQALTYLQRALLVHDLQKLDALEWESCFNKVLFPLLTKLLENISPADVGGMEETRMRASTLLSKVFLQHLSPLLSLSTFAALWLTILDFMDKYMHAGSSDLLSEAIPESLKNMLLVMDTAEIFHSADARGGGPSALWEITWERIDCFLPHLRDELFKQTVIQDPMPAEPHSQKPLASTHLTSAAGDPRMPGHPPLPEIPSEMGVCDSEKPESTRAPSSSSPGSPMASSPSKLSPAQEGPPPLTQPPLILQPLTSPLQVGVPPMTLPIILNPALIEATSPVPLLATPRPTDPIPTSEVN.

Residues 1 to 211 are DCB; DCB:DCB domain and DCB:HUS domain interaction; that stretch reads MVDKNIYIIQ…EPKSYVGTNM (211 aa). Positions 1-380 are interaction with RAB1B; that stretch reads MVDKNIYIIQ…SVHDMDYVNP (380 aa). 2 disordered regions span residues 210–264 and 289–353; these read NMKK…LTGG and CTDS…VESI. Residues 227–241 show a composition bias toward basic residues; the sequence is WKKQKRSPRPPRHTT. The segment covering 253–262 has biased composition (polar residues); that stretch reads NGATLPSNLT. Phosphoserine occurs at positions 349 and 352. Phosphothreonine is present on Thr507. Residues 530-550 form an HUS; DCB:HUS domain interaction region; that stretch reads RIPSFVTELYINYDCDYYCSN. The interval 603–634 is disordered; sequence QEKKETARPGFEAVDGNPETNKSERATSDGKS. Residues 692–882 form the SEC7 domain; sequence ELIEIKNKKK…EDMYHAIKNE (191 aa). The interval 886–1372 is phosphatidylinositol-phosphate binding; required for translocation to the leading edge and for ARF1 activation upon GPCR signaling; the sequence is MPEEQTGLVR…LSRPGPSPLV (487 aa). Residues 1286–1296 show a composition bias toward low complexity; sequence TARADAPDAGA. The tract at residues 1286–1335 is disordered; that stretch reads TARADAPDAGAQSDSELPSYHQNDVSLDRGYTSDSEVYTDHGRPGKIHRS. Polar residues predominate over residues 1297–1310; it reads QSDSELPSYHQNDV. Residue Ser1298 is modified to Phosphoserine. A Phosphotyrosine modification is found at Tyr1316. Residues Ser1318, Ser1320, and Ser1335 each carry the phosphoserine modification. Phosphothreonine is present on Thr1337. Disordered stretches follow at residues 1431–1486 and 1727–1812; these read GCKS…EGVP and PMPA…PLIL. Residues 1434-1448 are compositionally biased toward basic and acidic residues; the sequence is SQDKRSKSHKYDSKG. Phosphoserine is present on residues Ser1477, Ser1775, and Ser1786. Positions 1776-1793 are enriched in low complexity; it reads TRAPSSSSPGSPMASSPS.

In terms of assembly, can form homodimers and probably homotetramers. Interacts with COPG1; the interaction is independent on ARF1 activation. Interacts with ARF1, ARF3, ARF4 and ARF5. Interacts with RAB1B (GTP-bound form); required for GBF1 membrane association. Interacts with GGA1, GGA2 and GGA3. Interacts with USO1. Interacts (via SEC7 domain) with PNPLA2 (via C-terminus); the interaction is direct. Interacts with ARMH3.

The protein resides in the golgi apparatus. The protein localises to the cis-Golgi network. It is found in the endoplasmic reticulum-Golgi intermediate compartment. Its subcellular location is the trans-Golgi network. It localises to the cytoplasm. The protein resides in the lipid droplet. The protein localises to the membrane. Guanine-nucleotide exchange factor (GEF) for members of the Arf family of small GTPases involved in trafficking in the early secretory pathway; its GEF activity initiates the coating of nascent vesicles via the localized generation of activated ARFs through replacement of GDP with GTP. Recruitment to cis-Golgi membranes requires membrane association of Arf-GDP and can be regulated by ARF1, ARF3, ARF4 and ARF5. Involved in the recruitment of the COPI coat complex to the endoplasmic reticulum exit sites (ERES), and the endoplasmic reticulum-Golgi intermediate (ERGIC) and cis-Golgi compartments which implicates ARF1 activation. Involved in COPI vesicle-dependent retrograde transport from the ERGIC and cis-Golgi compartments to the endoplasmic reticulum (ER). Involved in the trans-Golgi network recruitment of GGA1, GGA2, GGA3, BIG1, BIG2, and the AP-1 adaptor protein complex related to chlathrin-dependent transport; the function requires its GEF activity (probably at least in part on ARF4 and ARF5). Has GEF activity towards ARF1. Has in vitro GEF activity towards ARF5. Involved in the processing of PSAP. Required for the assembly of the Golgi apparatus. The AMPK-phosphorylated form is involved in Golgi disassembly during mitotis and under stress conditions. May be involved in the COPI vesicle-dependent recruitment of PNPLA2 to lipid droplets; however, this function is under debate. In neutrophils, involved in G protein-coupled receptor (GPCR)-mediated chemotaxis und superoxide production. Proposed to be recruited by phosphatidylinositol-phosphates generated upon GPCR stimulation to the leading edge where it recruits and activates ARF1, and is involved in recruitment of GIT2 and the NADPH oxidase complex. Plays a role in maintaining mitochondrial morphology. The chain is Golgi-specific brefeldin A-resistance guanine nucleotide exchange factor 1 from Mus musculus (Mouse).